The sequence spans 45 residues: NLR family pyrin domain-containing protein 2B (45 aa).

As to expression, expressed in all tissues tested, including spleen, lymph node, thymus, tonsil, peripheral blood leukocyte, bone marrow, liver, heart, brain, placenta, lung, skeletal muscle, kidney and pancreas.

The protein resides in the cytoplasm. It localises to the nucleus. May function as a negative regulator of NF-kappa-B by preventing RELA/p65 phosphorylation at 'Ser-536', thereby inhibiting its transcriptional activity. Through NF-kappa-B regulation may control cytokine release upon Toll-like receptors activation and therefore play a role in modulation of innate immunity. May also play a role in cell cycle progression and apoptotic process. The chain is NLR family pyrin domain-containing protein 2B from Homo sapiens (Human).